The following is a 320-amino-acid chain: UV DNA damage endonuclease (320 aa).

This sequence belongs to the uve1/UvsE family.

Functionally, component in a DNA repair pathway. Removal of UV LIGHT damaged nucleotides. Recognizes pyrimidine dimers and cleave a phosphodiester bond immediately 5' to the lesion. This Bacillus velezensis (strain DSM 23117 / BGSC 10A6 / LMG 26770 / FZB42) (Bacillus amyloliquefaciens subsp. plantarum) protein is UV DNA damage endonuclease.